A 257-amino-acid polypeptide reads, in one-letter code: Thiazole synthase (257 aa).

The active-site Schiff-base intermediate with DXP is the Lys-96. Residues Gly-157, 184 to 185, and 206 to 207 each bind 1-deoxy-D-xylulose 5-phosphate; these read AG and NT.

This sequence belongs to the ThiG family. In terms of assembly, homotetramer. Forms heterodimers with either ThiH or ThiS.

It is found in the cytoplasm. The catalysed reaction is [ThiS sulfur-carrier protein]-C-terminal-Gly-aminoethanethioate + 2-iminoacetate + 1-deoxy-D-xylulose 5-phosphate = [ThiS sulfur-carrier protein]-C-terminal Gly-Gly + 2-[(2R,5Z)-2-carboxy-4-methylthiazol-5(2H)-ylidene]ethyl phosphate + 2 H2O + H(+). Its pathway is cofactor biosynthesis; thiamine diphosphate biosynthesis. Functionally, catalyzes the rearrangement of 1-deoxy-D-xylulose 5-phosphate (DXP) to produce the thiazole phosphate moiety of thiamine. Sulfur is provided by the thiocarboxylate moiety of the carrier protein ThiS. In vitro, sulfur can be provided by H(2)S. In Rhizobium rhizogenes (strain K84 / ATCC BAA-868) (Agrobacterium radiobacter), this protein is Thiazole synthase.